We begin with the raw amino-acid sequence, 991 residues long: Glutamate receptor 1 (991 aa).

The signal sequence occupies residues 1-27; sequence MHSRLKFLAYLHFICASSIFWPEFSSA. Topologically, residues 28 to 611 are extracellular; the sequence is QQQQQTVSLT…VFSFLNPLSQ (584 aa). Residues N67, N195, N208, and N281 are each glycosylated (N-linked (GlcNAc...) asparagine). Disordered regions lie at residues 300 to 321 and 354 to 379; these read DSRK…GPNS and FRSN…NESS. The span at 308–318 shows a compositional bias: polar residues; sequence SGQSQSQNAGG. Positions 365–379 are enriched in low complexity; it reads GGSSSSSATGTNESS. 5 N-linked (GlcNAc...) asparagine glycosylation sites follow: N376, N385, N426, N437, and N477. The chain crosses the membrane as a helical span at residues 612 to 632; the sequence is EIWISVILSYVGVSFVLYFVT. The Cytoplasmic segment spans residues 633 to 710; sequence RFPPYEWRIV…PSIAGRIAAA (78 aa). Residues 711 to 731 form a helical membrane-spanning segment; that stretch reads VWWFFTIILISSYTANLAAFL. At 732–895 the chain is on the extracellular side; sequence TVERMVAPIK…STPNELSLSN (164 aa). The chain crosses the membrane as a helical span at residues 896–916; it reads VAGIYYILIGGLLLAVIVAIM. Residues 917–991 are Cytoplasmic-facing; the sequence is EFFCRNKTPQ…ASNVRYQYSM (75 aa).

The protein belongs to the glutamate-gated ion channel (TC 1.A.10.1) family. Homooligomer. In terms of tissue distribution, central nervous system.

The protein localises to the cell membrane. The protein resides in the postsynaptic cell membrane. Its function is as follows. Receptor for glutamate. L-glutamate acts as an excitatory neurotransmitter at many synapses in the central nervous system. The postsynaptic actions of Glu are mediated by a variety of receptors that are named according to their selective agonists. Forms ligand-gated ion channels which are activated by kainate. The sequence is that of Glutamate receptor 1 (GluRIA) from Drosophila melanogaster (Fruit fly).